Consider the following 577-residue polypeptide: Moesin (577 aa).

The 294-residue stretch at 2–295 folds into the FERM domain; sequence PKTISVRVTT…GNHELYMRRR (294 aa). Serine 74 carries the phosphoserine modification. Lysine 79 is modified (N6-acetyllysine). Position 83 is an N6-succinyllysine (lysine 83). Positions 115–120 match the [IL]-x-C-x-x-[DE] motif motif; the sequence is IYCPPE. A Phosphotyrosine modification is found at tyrosine 116. At cysteine 117 the chain carries S-nitrosocysteine. N6-acetyllysine occurs at positions 139 and 165. Disordered stretches follow at residues 323–342, 375–409, and 466–518; these read LENEKKKREMAEKEKEKIER, LEQERKRAQSEAEKLAKERQEAEEAKEALLQASRD, and AMST…NERV. The segment covering 375 to 401 has biased composition (basic and acidic residues); sequence LEQERKRAQSEAEKLAKERQEAEEAKE. The residue at position 407 (serine 407) is a Phosphoserine. Residues 476-487 show a composition bias toward acidic residues; sequence AENEQDEQDENG. Basic and acidic residues predominate over residues 492–518; sequence ADLRADAMAKDRSEEERTTEAEKNERV. Serine 527 bears the Phosphoserine mark. Phosphothreonine; by ROCK2 and STK10 is present on threonine 558.

In resting T-cells, part of a PAG1-NHERF1-MSN complex which is disrupted upon TCR activation. Interacts with NHERF1. Interacts with PPP1R16B. Interacts with SELPLG and SYK; these interactions mediate the activation of SYK by SELPLG. Interacts with PDPN (via cytoplasmic domain); this interaction activates RHOA and promotes epithelial-mesenchymal transition. Interacts with SPN/CD43 cytoplasmic tail. Interacts with CD44. Interacts with ICAM2. Interacts with ICAM3 (via C-terminus). Interacts with PDZD8. Interacts with F-actin. Interacts with CD46. Interacts with PTPN6. In terms of assembly, (Microbial infection) Interacts with HIV-1 envelope protein gp120. Phosphorylation on Thr-558 is crucial for the formation of microvilli-like structures. Phosphorylation by ROCK2 suppresses the head-to-tail association of the N-terminal and C-terminal halves resulting in an opened conformation which is capable of actin and membrane-binding. Phosphorylation on Thr-558 by STK10 negatively regulates lymphocyte migration and polarization. Post-translationally, S-nitrosylation of Cys-117 is induced by interferon-gamma and oxidatively-modified low-densitity lipoprotein (LDL(ox)) implicating the iNOS-S100A8/9 transnitrosylase complex. As to expression, in all tissues and cultured cells studied.

It is found in the cell membrane. The protein localises to the cytoplasm. The protein resides in the cytoskeleton. It localises to the apical cell membrane. Its subcellular location is the cell projection. It is found in the microvillus membrane. The protein localises to the microvillus. With respect to regulation, a head-to-tail association, of the N-terminal and C-terminal halves results in a closed conformation (inactive form) which is incapable of actin or membrane-binding. Ezrin-radixin-moesin (ERM) family protein that connects the actin cytoskeleton to the plasma membrane and thereby regulates the structure and function of specific domains of the cell cortex. Tethers actin filaments by oscillating between a resting and an activated state providing transient interactions between moesin and the actin cytoskeleton. Once phosphorylated on its C-terminal threonine, moesin is activated leading to interaction with F-actin and cytoskeletal rearrangement. These rearrangements regulate many cellular processes, including cell shape determination, membrane transport, and signal transduction. The role of moesin is particularly important in immunity acting on both T and B-cells homeostasis and self-tolerance, regulating lymphocyte egress from lymphoid organs. Modulates phagolysosomal biogenesis in macrophages. Also participates in immunologic synapse formation. In Homo sapiens (Human), this protein is Moesin.